The following is a 101-amino-acid chain: Chaperone modulatory protein CbpM (101 aa).

Belongs to the CbpM family.

Functionally, interacts with CbpA and inhibits both the DnaJ-like co-chaperone activity and the DNA binding activity of CbpA. Together with CbpA, modulates the activity of the DnaK chaperone system. Does not inhibit the co-chaperone activity of DnaJ. This chain is Chaperone modulatory protein CbpM, found in Pseudomonas putida (strain ATCC 47054 / DSM 6125 / CFBP 8728 / NCIMB 11950 / KT2440).